We begin with the raw amino-acid sequence, 350 residues long: Phenylalanine--tRNA ligase alpha subunit (350 aa).

Glu259 provides a ligand contact to Mg(2+).

The protein belongs to the class-II aminoacyl-tRNA synthetase family. Phe-tRNA synthetase alpha subunit type 1 subfamily. As to quaternary structure, tetramer of two alpha and two beta subunits. The cofactor is Mg(2+).

The protein localises to the cytoplasm. The enzyme catalyses tRNA(Phe) + L-phenylalanine + ATP = L-phenylalanyl-tRNA(Phe) + AMP + diphosphate + H(+). The polypeptide is Phenylalanine--tRNA ligase alpha subunit (Rickettsia typhi (strain ATCC VR-144 / Wilmington)).